The following is a 122-amino-acid chain: NADH-quinone oxidoreductase subunit A (122 aa).

The next 3 helical transmembrane spans lie at 12–32 (IIIF…VNLI), 66–86 (LVAI…PWAI), and 91–111 (IGGL…VGFI).

It belongs to the complex I subunit 3 family. In terms of assembly, NDH-1 is composed of 14 different subunits. Subunits NuoA, H, J, K, L, M, N constitute the membrane sector of the complex.

It is found in the cell inner membrane. The catalysed reaction is a quinone + NADH + 5 H(+)(in) = a quinol + NAD(+) + 4 H(+)(out). Functionally, NDH-1 shuttles electrons from NADH, via FMN and iron-sulfur (Fe-S) centers, to quinones in the respiratory chain. The immediate electron acceptor for the enzyme in this species is believed to be ubiquinone. Couples the redox reaction to proton translocation (for every two electrons transferred, four hydrogen ions are translocated across the cytoplasmic membrane), and thus conserves the redox energy in a proton gradient. This Pelagibacter ubique (strain HTCC1062) protein is NADH-quinone oxidoreductase subunit A.